The chain runs to 272 residues: GPN-loop GTPase 3 (272 aa).

Position 13-18 (13-18 (GAGKST)) interacts with GTP. A Gly-Pro-Asn (GPN)-loop; involved in dimer interface motif is present at residues 70–72 (GPN). A GTP-binding site is contributed by 173 to 176 (SKLD).

It belongs to the GPN-loop GTPase family. As to quaternary structure, heterodimers with NPA3/GPN1 or GPN2. Binds to RNA polymerase II (RNAPII).

Small GTPase required for proper nuclear localization of RNA polymerase II and III (RNAPII and RNAPIII). May act at an RNAP assembly step prior to nuclear import. Promotes sister chromatid separation during anaphase. This Saccharomyces cerevisiae (strain ATCC 204508 / S288c) (Baker's yeast) protein is GPN-loop GTPase 3.